The sequence spans 125 residues: Small ribosomal subunit protein uS13 (125 aa).

Residues 90-125 (QRHRKGLPVRGQRTKTNARTRKGPKRTVAGKKKATK) form a disordered region.

Belongs to the universal ribosomal protein uS13 family. Part of the 30S ribosomal subunit. Forms a loose heterodimer with protein S19. Forms two bridges to the 50S subunit in the 70S ribosome.

In terms of biological role, located at the top of the head of the 30S subunit, it contacts several helices of the 16S rRNA. In the 70S ribosome it contacts the 23S rRNA (bridge B1a) and protein L5 of the 50S subunit (bridge B1b), connecting the 2 subunits; these bridges are implicated in subunit movement. Contacts the tRNAs in the A and P-sites. The sequence is that of Small ribosomal subunit protein uS13 from Bifidobacterium adolescentis (strain ATCC 15703 / DSM 20083 / NCTC 11814 / E194a).